The primary structure comprises 307 residues: Elongation factor Ts (307 aa).

The tract at residues 80–83 is involved in Mg(2+) ion dislocation from EF-Tu; the sequence is TDFV.

The protein belongs to the EF-Ts family.

The protein resides in the cytoplasm. Associates with the EF-Tu.GDP complex and induces the exchange of GDP to GTP. It remains bound to the aminoacyl-tRNA.EF-Tu.GTP complex up to the GTP hydrolysis stage on the ribosome. In Zymomonas mobilis subsp. mobilis (strain ATCC 31821 / ZM4 / CP4), this protein is Elongation factor Ts (tsf).